A 1673-amino-acid polypeptide reads, in one-letter code: Glutamine and serine-rich protein 1 (1673 aa).

8 disordered regions span residues 265–322 (VIPS…SSQA), 411–543 (DQTR…KSYV), 872–892 (RHMS…LSIN), 923–961 (QDLP…PKEG), 1050–1081 (DENA…QYSS), 1149–1182 (VIRP…KAEE), 1216–1272 (LSAL…EQLA), and 1390–1476 (KSKV…PPPI). Residues 289 to 309 (SSKTPKSQSVVSPELTQSYTK) show a composition bias toward polar residues. Low complexity-rich tracts occupy residues 310–322 (SSQN…SSQA) and 411–458 (DQTR…PSDS). Over residues 459 to 539 (YTSGQNQTLA…MQNSRTTADS (81 aa)) the composition is skewed to polar residues. A compositionally biased stretch (polar residues) spans 947–956 (NIKNPPNVNQ). A compositionally biased stretch (basic and acidic residues) spans 1222–1233 (NSEKRLKTEGDK). Composition is skewed to polar residues over residues 1259-1272 (KPSQ…EQLA) and 1397-1411 (ARTT…SKVS). Basic and acidic residues predominate over residues 1435–1451 (TKAEPPPKKRKQWKEEF). Low complexity predominate over residues 1452–1462 (SSSQSDSSPDM).

The protein localises to the chromosome. Plays an essential role in the protection and maintenance of transcriptional and developmental programs. Protects many bivalent promoters and poised enhancers from hypermethylation, showing a marked preference for these regulatory elements over other types of promoters or enhancers. Mechanistically, cooperates with tet1 and binds to DNA in a common complex to inhibit the binding of dnmt3a/3b and therefore de novo methylation. This chain is Glutamine and serine-rich protein 1 (qser1), found in Xenopus laevis (African clawed frog).